The primary structure comprises 211 residues: Probable GTP-binding protein EngB (211 aa).

Residues 30–204 form the EngB-type G domain; the sequence is EGFEVAFAGR…YTVLADWMEL (175 aa). Residues 38–45, 64–68, 82–85, 149–152, and 182–185 each bind GTP; these read GRSNAGKS, GRTQL, DLPG, TKAD, and LFSA. Residues S45 and T66 each coordinate Mg(2+).

This sequence belongs to the TRAFAC class TrmE-Era-EngA-EngB-Septin-like GTPase superfamily. EngB GTPase family. Mg(2+) is required as a cofactor.

Its function is as follows. Necessary for normal cell division and for the maintenance of normal septation. In Pseudomonas savastanoi pv. phaseolicola (strain 1448A / Race 6) (Pseudomonas syringae pv. phaseolicola (strain 1448A / Race 6)), this protein is Probable GTP-binding protein EngB.